The sequence spans 445 residues: Phosphoglucosamine mutase (445 aa).

Ser102 functions as the Phosphoserine intermediate in the catalytic mechanism. Residues Ser102, Asp241, Asp243, and Asp245 each coordinate Mg(2+). The residue at position 102 (Ser102) is a Phosphoserine.

This sequence belongs to the phosphohexose mutase family. Mg(2+) serves as cofactor. In terms of processing, activated by phosphorylation.

The catalysed reaction is alpha-D-glucosamine 1-phosphate = D-glucosamine 6-phosphate. Catalyzes the conversion of glucosamine-6-phosphate to glucosamine-1-phosphate. The sequence is that of Phosphoglucosamine mutase from Haemophilus influenzae (strain ATCC 51907 / DSM 11121 / KW20 / Rd).